The chain runs to 97 residues: Aspartyl/glutamyl-tRNA(Asn/Gln) amidotransferase subunit C (97 aa).

It belongs to the GatC family. In terms of assembly, heterotrimer of A, B and C subunits.

It carries out the reaction L-glutamyl-tRNA(Gln) + L-glutamine + ATP + H2O = L-glutaminyl-tRNA(Gln) + L-glutamate + ADP + phosphate + H(+). The catalysed reaction is L-aspartyl-tRNA(Asn) + L-glutamine + ATP + H2O = L-asparaginyl-tRNA(Asn) + L-glutamate + ADP + phosphate + 2 H(+). In terms of biological role, allows the formation of correctly charged Asn-tRNA(Asn) or Gln-tRNA(Gln) through the transamidation of misacylated Asp-tRNA(Asn) or Glu-tRNA(Gln) in organisms which lack either or both of asparaginyl-tRNA or glutaminyl-tRNA synthetases. The reaction takes place in the presence of glutamine and ATP through an activated phospho-Asp-tRNA(Asn) or phospho-Glu-tRNA(Gln). This chain is Aspartyl/glutamyl-tRNA(Asn/Gln) amidotransferase subunit C, found in Prochlorococcus marinus (strain MIT 9301).